A 305-amino-acid polypeptide reads, in one-letter code: Ribosomal RNA small subunit methyltransferase H (305 aa).

S-adenosyl-L-methionine is bound by residues 33 to 35, Asp52, Asp97, and Gln104; that span reads GGH.

This sequence belongs to the methyltransferase superfamily. RsmH family.

It is found in the cytoplasm. It carries out the reaction cytidine(1402) in 16S rRNA + S-adenosyl-L-methionine = N(4)-methylcytidine(1402) in 16S rRNA + S-adenosyl-L-homocysteine + H(+). Specifically methylates the N4 position of cytidine in position 1402 (C1402) of 16S rRNA. The protein is Ribosomal RNA small subunit methyltransferase H of Campylobacter lari (strain RM2100 / D67 / ATCC BAA-1060).